Reading from the N-terminus, the 342-residue chain is Nucleoid-associated protein Spea_1765 (342 aa).

This sequence belongs to the YejK family.

Its subcellular location is the cytoplasm. The protein resides in the nucleoid. This is Nucleoid-associated protein Spea_1765 from Shewanella pealeana (strain ATCC 700345 / ANG-SQ1).